We begin with the raw amino-acid sequence, 73 residues long: Protein BP4C (73 aa).

In terms of tissue distribution, pollen specific.

This is Protein BP4C (BP4C) from Brassica napus (Rape).